A 407-amino-acid polypeptide reads, in one-letter code: MQDTLAVILAGGMGSRLSPLTDDRAKPAVPFGGKYRIIDFTLTNCLHSGLRRILVLTQYKSHSLHKHLRNGWSIFNPELGEFITVVPPQMRKGGKWYEGTADALFHNMWLLARSDAKYVVVLSGDHIYRMDYAAMLEEHISKNATLTIACMQVPRHEASAFGVMAIDDDSRITCFVEKPADPPCIPNRPDHSLASMGIYIFNMDVLKKALTEDAEIEQSSHDFGKDVIPKLIATGSVFAYSFCSGKGRVARDCYWRDVGTIDSFYDANMDLLQPVPPMNLYQKNWAIRTYEQQYPPARTVSSATGNEGIFINSIIANGVINSGGSVQHSIISSNVRINDSALIVDSILFDDVEVGEGCKLIHCIIDKHVKIPPYTEIGLNPIEDRKRFHISERGVVVVPESYQFSTE.

Residues Tyr-97, Gly-162, 177-178 (EK), and Ser-195 each bind alpha-D-glucose 1-phosphate.

Belongs to the bacterial/plant glucose-1-phosphate adenylyltransferase family. Homotetramer.

The catalysed reaction is alpha-D-glucose 1-phosphate + ATP + H(+) = ADP-alpha-D-glucose + diphosphate. It functions in the pathway glycan biosynthesis; glycogen biosynthesis. Functionally, involved in the biosynthesis of ADP-glucose, a building block required for the elongation reactions to produce glycogen. Catalyzes the reaction between ATP and alpha-D-glucose 1-phosphate (G1P) to produce pyrophosphate and ADP-Glc. The chain is Glucose-1-phosphate adenylyltransferase 2 from Vibrio cholerae serotype O1 (strain ATCC 39315 / El Tor Inaba N16961).